Reading from the N-terminus, the 115-residue chain is Small nuclear ribonucleoprotein Sm D2 (115 aa).

The 86-residue stretch at 30 to 115 (LSVLQQAVKN…VVLVVRIPSA (86 aa)) folds into the Sm domain.

Belongs to the snRNP core protein family. In terms of assembly, belongs to the 40S cdc5-associated complex (or cwf complex), a spliceosome sub-complex reminiscent of a late-stage spliceosome composed of the U2, U5 and U6 snRNAs and at least brr2, cdc5, cwf2/prp3, cwf3/syf1, cwf4/syf3, cwf5/ecm2, spp42/cwf6, cwf7/spf27, cwf8, cwf9, cwf10, cwf11, cwf12, prp45/cwf13, cwf14, cwf15, cwf16, cwf17, cwf18, cwf19, cwf20, cwf21, cwf22, cwf23, cwf24, cwf25, cwf26, cyp7/cwf27, cwf28, cwf29/ist3, lea1, msl1, prp5/cwf1, prp10, prp12/sap130, prp17, prp22, sap61, sap62, sap114, sap145, slu7, smb1, smd1, smd3, smf1, smg1 and syf2.

It is found in the nucleus. Its subcellular location is the cytoplasm. The protein localises to the cytosol. Functionally, plays a role in pre-mRNA splicing as a core component of the spliceosomal U1, U2, U4 and U5 small nuclear ribonucleoproteins (snRNPs), the building blocks of the spliceosome. The chain is Small nuclear ribonucleoprotein Sm D2 (smd2) from Schizosaccharomyces pombe (strain 972 / ATCC 24843) (Fission yeast).